Here is a 450-residue protein sequence, read N- to C-terminus: MTPTPGEADLTNTPAPRARRSVLSRGSWSETARIAGILRKETVGGAVLLVASAVALVWANSPWAESYFALRDLKIGAEPFGLHLNLTLGTWAADGLLAVFFLVVGLELKREFVAGDLRDPARAALPMAAAVGGMVVPALIFVAVTAPVGDGATRGWAIPTATDIAFAVAVLAVISTHLPAALRTFLLTLAVVDDLLAVTVIAVFYTDEINLTALGLSIVPLALFALCVQRRIRSWWLLLPLGVATWVLMHESGVHATVAGVLLGFTVPVLRSVAAGGPEAGPGLAEHFEHRLRPLSAGVAVPVFAFFAAGVAIGGVSGLTRALSDPITLGIILGLVVGKPVGIFLTTRVLTAVTRANLDDALRWIDVFGVALLAGIGFTVSLLIGDLAYGLGSDRDDFVKVGVLTGSLVAALIAAVLLRVRNRHYRAVWLQETADTDRDGVPDVYQSQRD.

12 helical membrane passes run 43 to 63 (VGGAVLLVASAVALVWANSPW), 86 to 106 (LTLGTWAADGLLAVFFLVVGL), 124 to 144 (ALPMAAAVGGMVVPALIFVAV), 155 to 175 (GWAIPTATDIAFAVAVLAVIS), 185 to 205 (FLLTLAVVDDLLAVTVIAVFY), 208 to 228 (EINLTALGLSIVPLALFALCV), 234 to 254 (SWWLLLPLGVATWVLMHESGV), 258 to 278 (VAGVLLGFTVPVLRSVAAGGP), 299 to 319 (VAVPVFAFFAAGVAIGGVSGL), 326 to 346 (PITLGIILGLVVGKPVGIFLT), 364 to 384 (WIDVFGVALLAGIGFTVSLLI), and 398 to 418 (FVKVGVLTGSLVAALIAAVLL).

It belongs to the NhaA Na(+)/H(+) (TC 2.A.33) antiporter family.

It is found in the cell membrane. It catalyses the reaction Na(+)(in) + 2 H(+)(out) = Na(+)(out) + 2 H(+)(in). Its function is as follows. Na(+)/H(+) antiporter that extrudes sodium in exchange for external protons. The polypeptide is Na(+)/H(+) antiporter NhaA 2 (Mycobacterium sp. (strain KMS)).